Reading from the N-terminus, the 274-residue chain is Diaminopimelate epimerase (274 aa).

Asparagine 11, glutamine 44, and asparagine 64 together coordinate substrate. Catalysis depends on cysteine 73, which acts as the Proton donor. Substrate is bound by residues glycine 74–asparagine 75, asparagine 157, asparagine 190, and glutamate 208–arginine 209. The active-site Proton acceptor is cysteine 217. A substrate-binding site is contributed by glycine 218 to threonine 219.

It belongs to the diaminopimelate epimerase family. Homodimer.

It localises to the cytoplasm. It catalyses the reaction (2S,6S)-2,6-diaminopimelate = meso-2,6-diaminopimelate. The protein operates within amino-acid biosynthesis; L-lysine biosynthesis via DAP pathway; DL-2,6-diaminopimelate from LL-2,6-diaminopimelate: step 1/1. Functionally, catalyzes the stereoinversion of LL-2,6-diaminopimelate (L,L-DAP) to meso-diaminopimelate (meso-DAP), a precursor of L-lysine and an essential component of the bacterial peptidoglycan. This chain is Diaminopimelate epimerase, found in Blochmanniella pennsylvanica (strain BPEN).